The sequence spans 132 residues: uncharacterized protein (132 aa).

The signal sequence occupies residues 1–17 (MCPECFFLMLFFCGYRA). A compositionally biased stretch (low complexity) spans 25–39 (SSSSSSSSSSSFRSS). Residues 25-79 (SSSSSSSSSSSFRSSPAYGFSGRPPGGAGCRERSQRSCLRPGGLPSLTRNPGLQR) form a disordered region.

This is an uncharacterized protein from Escherichia coli (strain K12).